We begin with the raw amino-acid sequence, 120 residues long: Large ribosomal subunit protein eL34z (120 aa).

The segment at 31–51 is disordered; the sequence is VYQTTKKRASGPKCPVTGKRI.

Belongs to the eukaryotic ribosomal protein eL34 family.

This Arabidopsis thaliana (Mouse-ear cress) protein is Large ribosomal subunit protein eL34z (RPL34A).